The primary structure comprises 432 residues: D-amino acid dehydrogenase (432 aa).

An FAD-binding site is contributed by 3–17 (VVILGSGVVGVTSAW).

The protein belongs to the DadA oxidoreductase family. It depends on FAD as a cofactor.

The protein localises to the cell inner membrane. The catalysed reaction is a D-alpha-amino acid + A + H2O = a 2-oxocarboxylate + AH2 + NH4(+). It functions in the pathway amino-acid degradation; D-alanine degradation; NH(3) and pyruvate from D-alanine: step 1/1. Its function is as follows. Oxidative deamination of D-amino acids. The polypeptide is D-amino acid dehydrogenase (Salmonella typhi).